We begin with the raw amino-acid sequence, 840 residues long: Homeobox-leucine zipper protein HOX9 (840 aa).

Disordered regions lie at residues 1–26 (MAAAVAMRSGSGSDGGGGGYDKAGMD) and 135–160 (NPSLGNDTSCESNVTTPQNPLRDASN). The segment covering 12-21 (GSDGGGGGYD) has biased composition (gly residues). Positions 26-89 (DSGKYVRYTP…NRRCRDKQRK (64 aa)) form a DNA-binding region, homeobox. Residues 86–135 (KQRKEASRLQAVNRKLTAMNKLLMEENERLQKQVSQLVHENAYMKQQLQN) adopt a coiled-coil conformation. The START domain maps to 157 to 385 (DASNPSGLLT…IAQETSGEVV (229 aa)).

The protein belongs to the HD-ZIP homeobox family. Class III subfamily. In terms of tissue distribution, expressed in seedlings, roots, stems, leaf sheaths and blades and panicles.

Its subcellular location is the nucleus. Its function is as follows. Probable transcription factor. The protein is Homeobox-leucine zipper protein HOX9 (HOX9) of Oryza sativa subsp. japonica (Rice).